The following is an 82-amino-acid chain: MREVLILLIRFYRRFLSPLKPRTCRFHPTCSAYALEALERHGAFWGSYLAVRRVLRCHPWNPGGLDPVPVLFPPGKVRGGAE.

This sequence belongs to the UPF0161 family.

It is found in the cell inner membrane. Could be involved in insertion of integral membrane proteins into the membrane. The chain is Putative membrane protein insertion efficiency factor from Thermus thermophilus (strain ATCC BAA-163 / DSM 7039 / HB27).